The chain runs to 332 residues: MGSGYQLLQLPRERFRKTSFLVWVIILFQRAISMPLGIVTNSTLKATEIDQLVCRDKLSSTSQLKSVGLNLEGNGIATDVPSATKRWGFRSGVPPKVVSYEAGEWAENCYNLEIKKSDGSECLPLPPDGVRGFPRCRYVHKVQGTGPCPGDLAFHKNGAFFLYDRLASTVIYRGTTFAEGVVAFLILSEPKKHFWKATPAHEPVNTTDDSTSYYMTLTLSYEMSNFGGNESNTLFKVDNHTYVQLDRPHTPQFLVQLNETLRRNNRLSNSTGRLTWTLDPKIEPDVGEWAFWETKKKLFPTTSWRKLAFPNSINPHQQLLRSEPGGNCPRKN.

The N-terminal stretch at 1 to 33 (MGSGYQLLQLPRERFRKTSFLVWVIILFQRAIS) is a signal peptide. Residue Asn-41 is glycosylated (N-linked (GlcNAc...) asparagine; by host). 2 cysteine pairs are disulfide-bonded: Cys-109–Cys-136 and Cys-122–Cys-148. N-linked (GlcNAc...) asparagine; by host glycosylation is found at Asn-205, Asn-229, Asn-239, Asn-258, and Asn-269.

Belongs to the filoviruses glycoprotein family.

It is found in the secreted. The protein is Super small secreted glycoprotein (GP) of Reston ebolavirus (strain Reston-89) (REBOV).